The following is a 363-amino-acid chain: Isopentenyl-diphosphate delta-isomerase (363 aa).

A substrate-binding site is contributed by 6–7; that stretch reads RK. FMN contacts are provided by residues 64 to 66, Ser-94, and Asn-123; that span reads AMT. A substrate-binding site is contributed by Gln-153. A Mg(2+)-binding site is contributed by Glu-154. FMN is bound by residues Lys-185, Ser-210, Thr-215, 259 to 261, and 280 to 281; these read GVR and SA.

The protein belongs to the IPP isomerase type 2 family. Homooctamer. Dimer of tetramers. Requires Mg(2+) as cofactor. FMN serves as cofactor. NADPH is required as a cofactor.

It is found in the cytoplasm. It carries out the reaction isopentenyl diphosphate = dimethylallyl diphosphate. In terms of biological role, involved in the biosynthesis of isoprenoids. Catalyzes the 1,3-allylic rearrangement of the homoallylic substrate isopentenyl (IPP) to its allylic isomer, dimethylallyl diphosphate (DMAPP). The sequence is that of Isopentenyl-diphosphate delta-isomerase from Streptomyces sp. (strain CL190).